A 585-amino-acid chain; its full sequence is MGRIVRVTGPLVVADGMKGAKMYEVVRVGEMGLIGEIIRLEGDRAVIQVYEETAGIKPGEPVIGTGSSLSVELGPGLLTSMYDGIQRPLEKLRELSGDFIARGLTAPALPRDKKWHFTPTVKVGDRVTGGDILGVVPETSIIEHKILVPPWVEGEIVEIAEEGDYTVEEVIAKVKKPDGTIEELKMYHRWPVRVKRPYKNKLPPEVPLITGQRTIDTFFSIAKGGTAAIPGPFGSGKTVTQHQLAKWSDAQVVVYIGCGERGNEMTDVLEEFPKLKDPKTGKPLMERTVLIANTSNMPVAAREASIYTGITIAEYFRDQGYDVALMADSTSRWAEALREISGRLEEMPGEEGYPAYLASKIAEFYERAGRVVTLGSEPRVGSVSVIGAVSPPGGDFSEPVVQNTLRVVKVFWALDADLARRRHFPAINWLRSYSLYLDAVQDWWHKNVDPEWRKMRDTAMALLQKEAELQEIVRIVGPDALPDREKAILIVTRMLREDYLQQDAFDEVDTYCPPKKQVTMMRVILNFYNRTMEAVDRGVPVDEIARLPVREKIGRMKFEPDVEKIRALIDETNAQFEELFKKYGV.

Glycine 231–threonine 238 lines the ATP pocket.

The protein belongs to the ATPase alpha/beta chains family. In terms of assembly, has multiple subunits with at least A(3), B(3), C, D, E, F, H, I and proteolipid K(x).

The protein resides in the cell membrane. The catalysed reaction is ATP + H2O + 4 H(+)(in) = ADP + phosphate + 5 H(+)(out). In terms of biological role, component of the A-type ATP synthase that produces ATP from ADP in the presence of a proton gradient across the membrane. The A chain is the catalytic subunit. The chain is A-type ATP synthase subunit A from Thermococcus gammatolerans (strain DSM 15229 / JCM 11827 / EJ3).